The following is a 414-amino-acid chain: UDP-N-acetylglucosamine 1-carboxyvinyltransferase (414 aa).

19-20 (KN) is a binding site for phosphoenolpyruvate. Arg-89 is a UDP-N-acetyl-alpha-D-glucosamine binding site. Cys-113 serves as the catalytic Proton donor. Cys-113 carries the post-translational modification 2-(S-cysteinyl)pyruvic acid O-phosphothioketal. UDP-N-acetyl-alpha-D-glucosamine-binding positions include 118–122 (RPIDL), Asp-301, and Val-323.

The protein belongs to the EPSP synthase family. MurA subfamily.

The protein localises to the cytoplasm. It catalyses the reaction phosphoenolpyruvate + UDP-N-acetyl-alpha-D-glucosamine = UDP-N-acetyl-3-O-(1-carboxyvinyl)-alpha-D-glucosamine + phosphate. Its pathway is cell wall biogenesis; peptidoglycan biosynthesis. Functionally, cell wall formation. Adds enolpyruvyl to UDP-N-acetylglucosamine. The sequence is that of UDP-N-acetylglucosamine 1-carboxyvinyltransferase from Bdellovibrio bacteriovorus (strain ATCC 15356 / DSM 50701 / NCIMB 9529 / HD100).